The primary structure comprises 225 residues: Lipid A 4'-phosphatase (225 aa).

A run of 6 helical transmembrane segments spans residues 29–49, 51–71, 110–130, 136–156, 160–180, and 203–223; these read SAFT…YILL, NFHW…ITFA, FGFP…LICL, LSIF…YLGL, GDLV…YFIA, and TEVM…YSIV.

Belongs to the lipid A LpxF 4'-phosphatase family.

It localises to the cell inner membrane. The protein operates within bacterial outer membrane biogenesis; LPS lipid A biosynthesis. Probably removes the 4'-phosphate group from lipid A. Removal of this phosphate group confers resistance to cationic antimicrobial peptides (CAMPs), inflammation-associated peptides produced by the human host. This LPS modification helps maintain the stability of this commensal bacterium in gut microbiota. The chain is Lipid A 4'-phosphatase from Bacteroides thetaiotaomicron (strain ATCC 29148 / DSM 2079 / JCM 5827 / CCUG 10774 / NCTC 10582 / VPI-5482 / E50).